The following is a 462-amino-acid chain: Serine--tRNA ligase, cytoplasmic (462 aa).

Residue K241 forms a Glycyl lysine isopeptide (Lys-Gly) (interchain with G-Cter in URM1) linkage. L-serine is bound at residue 246-248 (TSE). ATP contacts are provided by residues 279-281 (RRE) and V295. E302 contacts L-serine. Residues K350 and K351 each participate in a glycyl lysine isopeptide (Lys-Gly) (interchain with G-Cter in URM1) cross-link. An ATP-binding site is contributed by 366 to 369 (ELVS). Cysteine persulfide occurs at positions 373 and 400. T404 contributes to the L-serine binding site.

Belongs to the class-II aminoacyl-tRNA synthetase family. Type-1 seryl-tRNA synthetase subfamily. Homodimer; the tRNA molecule probably binds across the dimer. Interacts with ABP140; interaction is required for the tRNA N(3)-methylcytidine methyltransferase activity of ABP140. In terms of processing, conjugated to URM1, a ubiquitin-like protein, in response to oxidative stresses. The attachment of URM1 to lysine residues exclusively depends on the presence of a peroxidatic cysteine in the target protein, with low specificity for the particular residue, motif, or structural context at which urmylation can occur. The URM1-conjugation reaction is mechanistically and directly coupled to the process of cysteine persulfidation, transfering the sulfur atom of the URM1 thiocarboxyl group to redox-active cysteine residues in the target protein if it is exposed to oxidative conditions. Post-translationally, persulfidated on specific redox-active cysteine residues. Persulfidation (also called protein S-sulfhydration) may provide a molecular mechanism that enables cells to protect vulnerable cysteine residues from reactive oxygen species (ROS) under stress conditions.

Its subcellular location is the cytoplasm. It is found in the cytosol. It catalyses the reaction tRNA(Ser) + L-serine + ATP = L-seryl-tRNA(Ser) + AMP + diphosphate + H(+). Its function is as follows. Catalyzes the attachment of serine to tRNA(Ser) in a two-step reaction: serine is first activated by ATP to form Ser-AMP and then transferred to the acceptor end of tRNA(Ser). This Saccharomyces cerevisiae (strain ATCC 204508 / S288c) (Baker's yeast) protein is Serine--tRNA ligase, cytoplasmic (SES1).